The following is a 661-amino-acid chain: MDLQQSTTITSLEKWCLDESLSGCRRHYSVKKKLKLIRVLGLFMGLVAISTVSFSISAFSETDTQSTGEASVVSGPRVAQGYHQRTLLDLNDKILDYTPQPPLSKEGESENSTDHAQGDYPKDIFSLEERRKGAIILHVIGMIYMFIALAIVCDEFFVPSLTVITEKLGISDDVAGATFMAAGGSAPELFTSLIGVFIAHSNVGIGTIVGSAVFNILFVIGMCALFSREILNLTWWPLFRDVSFYIVDLIMLIIFFLDNVIMWWESLLLLTAYFCYVVFMKFNVQVEKWVKQMINRNKVVKVTAPEAQAKPSAARDKDEPTLPAKPRLQRGGSSASLHNSLMRNSIFQLMIHTLDPLAEELGSYGKLKYYDTMTEEGRFREKASILHKIAKKKCHVDENERQNGAANHVEKIELPNSTSTDVEMTPSSDASEPVQNGNLSHNIEGAEAQTADEEEDQPLSLAWPSETRKQVTFLIVFPIVFPLWITLPDVRKPSSRKFFPITFFGSITWIAVFSYLMVWWAHQVGETIGISEEIMGLTILAAGTSIPDLITSVIVARKGLGDMAVSSSVGSNIFDITVGLPLPWLLYTVIHRFQPVAVSSNGLFCAIVLLFIMLLFVILSIALCKWRMNKILGFIMFGLYFVFLVVSVLLEDRILTCPVSI.

The Cytoplasmic portion of the chain corresponds to 1-38 (MDLQQSTTITSLEKWCLDESLSGCRRHYSVKKKLKLIR). A helical membrane pass occupies residues 39–59 (VLGLFMGLVAISTVSFSISAF). The Extracellular segment spans residues 60 to 132 (SETDTQSTGE…DIFSLEERRK (73 aa)). Residues 99-120 (PQPPLSKEGESENSTDHAQGDY) form a disordered region. Residues 105 to 120 (KEGESENSTDHAQGDY) show a composition bias toward basic and acidic residues. An N-linked (GlcNAc...) asparagine glycan is attached at Asn-111. A helical transmembrane segment spans residues 133–153 (GAIILHVIGMIYMFIALAIVC). The Cytoplasmic segment spans residues 154–178 (DEFFVPSLTVITEKLGISDDVAGAT). One copy of the Alpha-1 repeat lies at 174 to 214 (VAGATFMAAGGSAPELFTSLIGVFIAHSNVGIGTIVGSAVF). A helical transmembrane segment spans residues 179–199 (FMAAGGSAPELFTSLIGVFIA). Over 200–204 (HSNVG) the chain is Extracellular. A helical transmembrane segment spans residues 205–225 (IGTIVGSAVFNILFVIGMCAL). The Cytoplasmic segment spans residues 226–243 (FSREILNLTWWPLFRDVS). Residues 244-264 (FYIVDLIMLIIFFLDNVIMWW) traverse the membrane as a helical segment. Glu-265 is a topological domain (extracellular). A helical membrane pass occupies residues 266 to 286 (SLLLLTAYFCYVVFMKFNVQV). Residues 287–497 (EKWVKQMINR…PDVRKPSSRK (211 aa)) are Cytoplasmic-facing. The disordered stretch occupies residues 306 to 336 (EAQAKPSAARDKDEPTLPAKPRLQRGGSSAS). Phosphoserine is present on residues Ser-336 and Ser-340. A disordered region spans residues 397 to 439 (DENERQNGAANHVEKIELPNSTSTDVEMTPSSDASEPVQNGNL). The segment covering 415 to 439 (PNSTSTDVEMTPSSDASEPVQNGNL) has biased composition (polar residues). The chain crosses the membrane as a helical span at residues 498–518 (FFPITFFGSITWIAVFSYLMV). Residues 519–533 (WWAHQVGETIGISEE) are Extracellular-facing. The helical transmembrane segment at 534-554 (IMGLTILAAGTSIPDLITSVI) threads the bilayer. Residues 541 to 572 (AAGTSIPDLITSVIVARKGLGDMAVSSSVGSN) form an Alpha-2 repeat. Residues 555–569 (VARKGLGDMAVSSSV) are Cytoplasmic-facing. The chain crosses the membrane as a helical span at residues 570–590 (GSNIFDITVGLPLPWLLYTVI). Residues 591-602 (HRFQPVAVSSNG) are Extracellular-facing. A helical transmembrane segment spans residues 603 to 623 (LFCAIVLLFIMLLFVILSIAL). At 624 to 630 (CKWRMNK) the chain is on the cytoplasmic side. The helical transmembrane segment at 631 to 651 (ILGFIMFGLYFVFLVVSVLLE) threads the bilayer. Topologically, residues 652–661 (DRILTCPVSI) are extracellular.

This sequence belongs to the Ca(2+):cation antiporter (CaCA) (TC 2.A.19) family. SLC24A subfamily.

It localises to the cell membrane. The enzyme catalyses Ca(2+)(out) + K(+)(out) + 4 Na(+)(in) = Ca(2+)(in) + K(+)(in) + 4 Na(+)(out). Functionally, calcium, potassium:sodium antiporter that transports 1 Ca(2+) and 1 K(+) in exchange for 4 Na(+). Required for learming and memory by regulating neuronal Ca(2+), which is essential for the development of synaptic plasticity. In Homo sapiens (Human), this protein is Sodium/potassium/calcium exchanger 2 (SLC24A2).